The sequence spans 175 residues: Mitochondrial inner membrane protease subunit 2 (175 aa).

A helical membrane pass occupies residues 19 to 37 (FFVAVPVAVTFLDRVACVA). Residues Ser43 and Lys91 contribute to the active site.

Belongs to the peptidase S26 family. IMP2 subfamily. As to quaternary structure, heterodimer of 2 subunits, IMMPL1 and IMMPL2. As to expression, expressed in all tissues tested except adult liver and lung.

It is found in the mitochondrion inner membrane. In terms of biological role, catalyzes the removal of transit peptides required for the targeting of proteins from the mitochondrial matrix, across the inner membrane, into the inter-membrane space. Known to process the nuclear encoded protein DIABLO. The sequence is that of Mitochondrial inner membrane protease subunit 2 (IMMP2L) from Homo sapiens (Human).